The following is a 318-amino-acid chain: MATLEQPYLDLLNKIMIEGHDKEDRTGTGTRSIFGAQMRFNLSEGFPILTTKRVPFGLIKSELLWFLRGDTNIRFLLEHNNHIWDEWAFKNWVESDEYHGPDMTNFGLRSQEDAKFKQVYQEEMKKFDERILADRDFAVKFGNLGDVYGAQWRHWQKREGGFIDQIQNVIDQIKKTPYSRRLIVSAWNPEDVPNSALPPCHVLFQFYVNDGRLSVQLYQRSGDMFLGVPFNIASYSLLVNLIAQETGLKPGEFIHTLGDAHIYRNHFDQVKELLTRKPYDSPKLWLNPDKKKIEDFEMSDIKLVDYKHHGTIKAPVAV.

DUMP contacts are provided by residues Arg-25 and 180-181 (RR). The active-site Nucleophile is Cys-200. DUMP is bound by residues 220 to 223 (RSGD), Asn-231, and 261 to 263 (HIY). Residue Asp-223 participates in (6R)-5,10-methylene-5,6,7,8-tetrahydrofolate binding. Ala-317 is a (6R)-5,10-methylene-5,6,7,8-tetrahydrofolate binding site.

Belongs to the thymidylate synthase family. Bacterial-type ThyA subfamily. In terms of assembly, homodimer.

The protein localises to the cytoplasm. It catalyses the reaction dUMP + (6R)-5,10-methylene-5,6,7,8-tetrahydrofolate = 7,8-dihydrofolate + dTMP. It participates in pyrimidine metabolism; dTTP biosynthesis. Catalyzes the reductive methylation of 2'-deoxyuridine-5'-monophosphate (dUMP) to 2'-deoxythymidine-5'-monophosphate (dTMP) while utilizing 5,10-methylenetetrahydrofolate (mTHF) as the methyl donor and reductant in the reaction, yielding dihydrofolate (DHF) as a by-product. This enzymatic reaction provides an intracellular de novo source of dTMP, an essential precursor for DNA biosynthesis. The protein is Thymidylate synthase of Lactobacillus gasseri (strain ATCC 33323 / DSM 20243 / BCRC 14619 / CIP 102991 / JCM 1131 / KCTC 3163 / NCIMB 11718 / NCTC 13722 / AM63).